The sequence spans 342 residues: Dihydroorotase (342 aa).

Residues His-13 and His-15 each coordinate Zn(2+). Residues 15–17 (HLR) and Asn-41 contribute to the substrate site. Lys-98, His-135, and His-173 together coordinate Zn(2+). Lys-98 is modified (N6-carboxylysine). Position 135 (His-135) interacts with substrate. Leu-218 is a substrate binding site. Asp-246 lines the Zn(2+) pocket. Asp-246 is an active-site residue. His-250 and Ala-262 together coordinate substrate.

This sequence belongs to the metallo-dependent hydrolases superfamily. DHOase family. Class II DHOase subfamily. As to quaternary structure, homodimer. Zn(2+) serves as cofactor.

The catalysed reaction is (S)-dihydroorotate + H2O = N-carbamoyl-L-aspartate + H(+). Its pathway is pyrimidine metabolism; UMP biosynthesis via de novo pathway; (S)-dihydroorotate from bicarbonate: step 3/3. Catalyzes the reversible cyclization of carbamoyl aspartate to dihydroorotate. This chain is Dihydroorotase, found in Aliivibrio fischeri (strain ATCC 700601 / ES114) (Vibrio fischeri).